The sequence spans 134 residues: Histone H2A (134 aa).

The span at 1 to 11 (MTGGGKSGGKA) shows a compositional bias: gly residues. The tract at residues 1–25 (MTGGGKSGGKASGSKNAQSRSSKAG) is disordered. N6-acetyllysine occurs at positions 6 and 10. An N5-methylglutamine modification is found at Gln107. Ser131 is subject to Phosphoserine. Positions 131–132 (SQ) match the [ST]-Q motif motif.

Belongs to the histone H2A family. The nucleosome is a histone octamer containing two molecules each of H2A, H2B, H3 and H4 assembled in one H3-H4 heterotetramer and two H2A-H2B heterodimers. The octamer wraps approximately 147 bp of DNA. Post-translationally, phosphorylated to form H2AS128ph (gamma-H2A) in response to DNA double-strand breaks (DSBs) generated by exogenous genotoxic agents and by stalled replication forks. Phosphorylation is dependent on the DNA damage checkpoint kinases mec-1/ATR and tel-1/ATM, spreads on either side of a detected DSB site and may mark the surrounding chromatin for recruitment of proteins required for DNA damage signaling and repair. Gamma-H2A is removed from the DNA prior to the strand invasion-primer extension step of the repair process and subsequently dephosphorylated. Dephosphorylation is necessary for efficient recovery from the DNA damage checkpoint. Acetylated by esa-1 to form H2AK4ac and H2AK7ac.

Its subcellular location is the nucleus. The protein localises to the chromosome. Its function is as follows. Core component of nucleosome which plays a central role in DNA double strand break (DSB) repair. Nucleosomes wrap and compact DNA into chromatin, limiting DNA accessibility to the cellular machineries which require DNA as a template. Histones thereby play a central role in transcription regulation, DNA repair, DNA replication and chromosomal stability. DNA accessibility is regulated via a complex set of post-translational modifications of histones, also called histone code, and nucleosome remodeling. This chain is Histone H2A (hh2a), found in Neurospora crassa (strain ATCC 24698 / 74-OR23-1A / CBS 708.71 / DSM 1257 / FGSC 987).